The primary structure comprises 77 residues: UPF0349 protein lmo2392 (77 aa).

This sequence belongs to the UPF0349 family.

The protein is UPF0349 protein lmo2392 of Listeria monocytogenes serovar 1/2a (strain ATCC BAA-679 / EGD-e).